The following is a 120-amino-acid chain: Large ribosomal subunit protein uL18 (120 aa).

It belongs to the universal ribosomal protein uL18 family. Part of the 50S ribosomal subunit; part of the 5S rRNA/L5/L18/L25 subcomplex. Contacts the 5S and 23S rRNAs.

Functionally, this is one of the proteins that bind and probably mediate the attachment of the 5S RNA into the large ribosomal subunit, where it forms part of the central protuberance. In Hyphomonas neptunium (strain ATCC 15444), this protein is Large ribosomal subunit protein uL18.